The primary structure comprises 180 residues: ATP-dependent protease subunit HslV (180 aa).

Residue Thr5 is part of the active site. Na(+) contacts are provided by Gly161, Cys164, and Thr167.

The protein belongs to the peptidase T1B family. HslV subfamily. A double ring-shaped homohexamer of HslV is capped on each side by a ring-shaped HslU homohexamer. The assembly of the HslU/HslV complex is dependent on binding of ATP.

Its subcellular location is the cytoplasm. It carries out the reaction ATP-dependent cleavage of peptide bonds with broad specificity.. With respect to regulation, allosterically activated by HslU binding. In terms of biological role, protease subunit of a proteasome-like degradation complex believed to be a general protein degrading machinery. In Campylobacter jejuni subsp. doylei (strain ATCC BAA-1458 / RM4099 / 269.97), this protein is ATP-dependent protease subunit HslV.